Reading from the N-terminus, the 83-residue chain is U5-theraphotoxin-Hs1a 1 (83 aa).

The N-terminal stretch at 1-21 (MKTSMFLTLTGLGLLFVVCYA) is a signal peptide. A propeptide spanning residues 22-49 (SESEEKEFPKELLSSIFAADSDFKVEER) is cleaved from the precursor. Disulfide bonds link Cys-51-Cys-63, Cys-56-Cys-68, and Cys-62-Cys-75.

Belongs to the neurotoxin 10 (Hwtx-1) family. 51 (Hntx-8) subfamily. Hntx-8 sub-subfamily. In terms of tissue distribution, expressed by the venom gland.

The protein localises to the secreted. Agglutinates human and mice erythrocytes. This activity can be specifically inhibited by mannosamine. This lectin shows very low toxicity in both mammals and insects. In Cyriopagopus schmidti (Chinese bird spider), this protein is U5-theraphotoxin-Hs1a 1.